Here is a 566-residue protein sequence, read N- to C-terminus: Membrane protein insertase YidC (566 aa).

5 consecutive transmembrane segments (helical) span residues 3–23, 346–366, 369–389, 436–456, and 509–529; these read IKRI…FNAW, GWLW…HAVV, WGWS…WFSA, GGCL…YVII, and MWIL…GLVL.

The protein belongs to the OXA1/ALB3/YidC family. Type 1 subfamily. Interacts with the Sec translocase complex via SecD. Specifically interacts with transmembrane segments of nascent integral membrane proteins during membrane integration.

It localises to the cell inner membrane. Required for the insertion and/or proper folding and/or complex formation of integral membrane proteins into the membrane. Involved in integration of membrane proteins that insert both dependently and independently of the Sec translocase complex, as well as at least some lipoproteins. Aids folding of multispanning membrane proteins. In Coxiella burnetii (strain CbuK_Q154) (Coxiella burnetii (strain Q154)), this protein is Membrane protein insertase YidC.